A 92-amino-acid chain; its full sequence is Large ribosomal subunit protein eL31 (92 aa).

Belongs to the eukaryotic ribosomal protein eL31 family.

This chain is Large ribosomal subunit protein eL31, found in Desulfurococcus amylolyticus (strain DSM 18924 / JCM 16383 / VKM B-2413 / 1221n) (Desulfurococcus kamchatkensis).